Here is a 403-residue protein sequence, read N- to C-terminus: UPF0284 protein PMT_1350 (403 aa).

This sequence belongs to the UPF0284 family.

In Prochlorococcus marinus (strain MIT 9313), this protein is UPF0284 protein PMT_1350.